We begin with the raw amino-acid sequence, 186 residues long: Ribosome rescue factor SmrB (186 aa).

Positions Ile-99–Glu-174 constitute a Smr domain.

It belongs to the SmrB family. As to quaternary structure, associates with collided ribosomes, but not with correctly translating polysomes.

Its function is as follows. Acts as a ribosome collision sensor. Detects stalled/collided disomes (pairs of ribosomes where the leading ribosome is stalled and a second ribosome has collided with it) and endonucleolytically cleaves mRNA at the 5' boundary of the stalled ribosome. Stalled/collided disomes form a new interface (primarily via the 30S subunits) that binds SmrB. Cleaved mRNA becomes available for tmRNA ligation, leading to ribosomal subunit dissociation and rescue of stalled ribosomes. This is Ribosome rescue factor SmrB from Buchnera aphidicola subsp. Acyrthosiphon pisum (strain 5A).